A 315-amino-acid polypeptide reads, in one-letter code: Acetyl-coenzyme A carboxylase carboxyl transferase subunit alpha (315 aa).

Residues 40-293 (LQDKSKTLTE…RAELSSQLAM (254 aa)) form the CoA carboxyltransferase C-terminal domain.

It belongs to the AccA family. In terms of assembly, acetyl-CoA carboxylase is a heterohexamer composed of biotin carboxyl carrier protein (AccB), biotin carboxylase (AccC) and two subunits each of ACCase subunit alpha (AccA) and ACCase subunit beta (AccD).

It localises to the cytoplasm. It carries out the reaction N(6)-carboxybiotinyl-L-lysyl-[protein] + acetyl-CoA = N(6)-biotinyl-L-lysyl-[protein] + malonyl-CoA. It functions in the pathway lipid metabolism; malonyl-CoA biosynthesis; malonyl-CoA from acetyl-CoA: step 1/1. In terms of biological role, component of the acetyl coenzyme A carboxylase (ACC) complex. First, biotin carboxylase catalyzes the carboxylation of biotin on its carrier protein (BCCP) and then the CO(2) group is transferred by the carboxyltransferase to acetyl-CoA to form malonyl-CoA. The protein is Acetyl-coenzyme A carboxylase carboxyl transferase subunit alpha of Pseudomonas fluorescens (strain Pf0-1).